Here is a 455-residue protein sequence, read N- to C-terminus: uncharacterized protein (455 aa).

The signal sequence occupies residues 1-24 (MKTTKILLHTGVLALSLLATQVMA).

This is an uncharacterized protein from Pseudomonas aeruginosa (strain ATCC 15692 / DSM 22644 / CIP 104116 / JCM 14847 / LMG 12228 / 1C / PRS 101 / PAO1).